The chain runs to 132 residues: Small ribosomal subunit protein uS8 (132 aa).

It belongs to the universal ribosomal protein uS8 family. As to quaternary structure, part of the 30S ribosomal subunit. Contacts proteins S5 and S12.

One of the primary rRNA binding proteins, it binds directly to 16S rRNA central domain where it helps coordinate assembly of the platform of the 30S subunit. This chain is Small ribosomal subunit protein uS8, found in Geobacillus kaustophilus (strain HTA426).